A 373-amino-acid chain; its full sequence is GTP cyclohydrolase 1 type 2 homolog (373 aa).

Residues H68, H69, D107, H333, and E336 each coordinate a divalent metal cation.

The protein belongs to the GTP cyclohydrolase I type 2/NIF3 family. As to quaternary structure, homohexamer.

This is GTP cyclohydrolase 1 type 2 homolog (yqfO) from Bacillus subtilis (strain 168).